The chain runs to 114 residues: FK506-binding protein 1 (114 aa).

Ser2 carries the post-translational modification N-acetylserine. The 89-residue stretch at 26-114 (GDLVTIHYTG…VFDVELLKVN (89 aa)) folds into the PPIase FKBP-type domain. Ser51 is modified (phosphoserine).

It belongs to the FKBP-type PPIase family. FKBP1 subfamily. As to quaternary structure, interacts with HOM3; the interaction is direct, plays a role in feedback inhibition of aspartokinase by threonine, and is inhibited by tacrolimus and sirolimus. Interacts with HMO1. Interacts with FAP1.

Its subcellular location is the cytoplasm. It is found in the mitochondrion. The catalysed reaction is [protein]-peptidylproline (omega=180) = [protein]-peptidylproline (omega=0). Its function is as follows. PPIases accelerate the folding of proteins. It catalyzes the cis-trans isomerization of proline imidic peptide bonds in oligopeptides. Plays a role in feedback inhibition of the pathway synthesizing the aspartate family of amino acids by binding to aspartokinase. The polypeptide is FK506-binding protein 1 (FPR1) (Saccharomyces cerevisiae (strain ATCC 204508 / S288c) (Baker's yeast)).